We begin with the raw amino-acid sequence, 155 residues long: Ribosomal RNA large subunit methyltransferase H (155 aa).

S-adenosyl-L-methionine-binding positions include leucine 72, glycine 103, and 122–127; that span reads LGRMVW.

Belongs to the RNA methyltransferase RlmH family. Homodimer.

It is found in the cytoplasm. It catalyses the reaction pseudouridine(1915) in 23S rRNA + S-adenosyl-L-methionine = N(3)-methylpseudouridine(1915) in 23S rRNA + S-adenosyl-L-homocysteine + H(+). In terms of biological role, specifically methylates the pseudouridine at position 1915 (m3Psi1915) in 23S rRNA. The chain is Ribosomal RNA large subunit methyltransferase H from Cereibacter sphaeroides (strain ATCC 17029 / ATH 2.4.9) (Rhodobacter sphaeroides).